We begin with the raw amino-acid sequence, 223 residues long: B-cell antigen receptor complex-associated protein alpha chain (223 aa).

An N-terminal signal peptide occupies residues 1-31 (MPEGPQALQSPPATIFLLLISAAGLGPGCQA). An Ig-like C2-type domain is found at 32–120 (LWVEWGPPSV…KIQRSCGTYL (89 aa)). The Extracellular segment spans residues 32–140 (LWVEWGPPSV…LDMGEGTKNN (109 aa)). An intrachain disulfide couples Cys53 to Cys104. N-linked (GlcNAc...) asparagine glycosylation is found at Asn56, Asn61, Asn71, and Asn95. Residues 141-161 (IITAEGIILLICAVVPGTLLL) traverse the membrane as a helical segment. The Cytoplasmic portion of the chain corresponds to 162-223 (FRKRWQNMKF…HIGDAQLEKP (62 aa)). The ITAM domain maps to 174 to 202 (DIQDDYEDENLYEGLNLDDCSMYEDISRG). Tyr185 carries the phosphotyrosine; by SRC-type Tyr-kinases modification. Phosphotyrosine is present on Tyr196. Arg201 bears the Asymmetric dimethylarginine; by PRMT1 mark. The residue at position 207 (Tyr207) is a Phosphotyrosine; by Tyr-kinases.

In terms of assembly, heterodimer of alpha and beta chains; disulfide-linked. Part of the B-cell antigen receptor complex where the alpha/beta chain heterodimer is non-covalently associated with an antigen-specific membrane-bound surface immunoglobulin of two heavy chains and two light chains. Interacts through its phosphorylated ITAM domain with the SH2 domains of SYK which stimulates SYK autophosphorylation and activation. Also interacts, when phosphorylated on Tyr-207, with the SH2 domain of BLNK/SLP65, bringing BLNK into proximity with SYK and allowing SYK to phosphorylate BLNK which is necessary for trafficking of the BCR to late endosomes. Interacts with Src-family tyrosine kinases including FYN and LYN, increasing their activity. Post-translationally, phosphorylated on tyrosine, serine and threonine residues upon B-cell activation. Phosphorylation of tyrosine residues by Src-family kinases, including LYN, is an early and essential feature of the BCR signaling cascade. The phosphorylated tyrosines serve as docking sites for SH2-domain containing kinases, leading to their activation which in turn leads to phosphorylation of downstream targets. Phosphorylation of serine and threonine residues may prevent subsequent tyrosine phosphorylation. Arginine methylation in the ITAM domain may interfere with the binding of SYK. It promotes signals leading to B-cell differentiation. B-cells.

The protein localises to the cell membrane. Its function is as follows. Required in cooperation with CD79B for initiation of the signal transduction cascade activated by binding of antigen to the B-cell antigen receptor complex (BCR) which leads to internalization of the complex, trafficking to late endosomes and antigen presentation. Also required for BCR surface expression and for efficient differentiation of pro- and pre-B-cells. Stimulates SYK autophosphorylation and activation. Binds to BLNK, bringing BLNK into proximity with SYK and allowing SYK to phosphorylate BLNK. Also interacts with and increases activity of some Src-family tyrosine kinases. Represses BCR signaling during development of immature B-cells. The sequence is that of B-cell antigen receptor complex-associated protein alpha chain (CD79A) from Bos taurus (Bovine).